The primary structure comprises 1530 residues: Regulating synaptic membrane exocytosis protein 2 (1530 aa).

Positions 1-34 (MSAPLGPRGRPAPTPAASQPPPQPEMPDLSHLTE) are disordered. The span at 10-25 (RPAPTPAASQPPPQPE) shows a compositional bias: pro residues. The region spanning 26-194 (MPDLSHLTEE…TKSGAWFYNS (169 aa)) is the RabBD domain. The segment at 126–182 (KGDAPTCGICHKTKFADGCGHNCSYCQTKFCARCGGRVSLRSNKVMWVCNLCRKQQE) adopts an FYVE-type zinc-finger fold. 8 residues coordinate Zn(2+): cysteine 132, cysteine 135, cysteine 148, cysteine 151, cysteine 156, cysteine 159, cysteine 174, and cysteine 177. 2 disordered regions span residues 195 to 608 (GSNT…ERQK) and 632 to 655 (SGVDTCSSTTLNEEHSHSDKHPVT). 5 stretches are compositionally biased toward basic and acidic residues: residues 210–225 (LRNEEAPQEKKAKLHE), 327–338 (EPGHLNYRDSNR), 357–375 (RDEYERQRREEEYQARYRS), 391–410 (EQMRIHAEVSRARHERRHSD), and 419–443 (EDSRISLLRMDRPSRQRSVSERRAA). A Phosphoserine modification is found at serine 409. The segment covering 458–472 (AQGQSSYPQRTSNHS) has biased composition (polar residues). Over residues 484-501 (DRPDMRRADSLRKQHHLD) the composition is skewed to basic and acidic residues. Residues 519 to 530 (RNDSLSSDQSES) are compositionally biased toward polar residues. The segment covering 537–546 (RPHKSKKGGK) has biased composition (basic residues). The span at 567–577 (SCDDVELESES) shows a compositional bias: acidic residues. 2 stretches are compositionally biased toward basic and acidic residues: residues 578–592 (VSEKGDSQKGKRKTS) and 643–653 (NEEHSHSDKHP). The region spanning 677 to 763 (DGSVPRDSGA…EPQVELVVSR (87 aa)) is the PDZ domain. Phosphothreonine is present on threonine 698. Residues 771 to 802 (IPDSTHAQLESSSSSFESQKMDRPSISVTSPM) form a disordered region. Serine 800 and serine 803 each carry phosphoserine. Positions 814 to 937 (LSGQLSIKLW…ALLDDEPHWY (124 aa)) constitute a C2 1 domain. 6 disordered regions span residues 948–982 (PLPRPSPYLPRRQLHGESPTRRLQRSKRISDSEVS), 1003–1122 (LQSS…ERSA), 1130–1149 (RQMKLNKYKQVAGSDPRLEQ), 1154–1187 (KYRSGWDPHRGADTVSTKSSDSDVSDVSAVSRTS), 1242–1263 (SLEKNDGSQSDTAVGALGTSGK), and 1282–1307 (KSRSASQLSQTEGGGKKLRSTVQRST). Residues 1003 to 1024 (LQSSTLSVPEQVMSSNHCSPSG) show a composition bias toward polar residues. The segment covering 1067 to 1086 (RMDRHRVMDDHYSSDRDRSH) has biased composition (basic and acidic residues). The segment covering 1088 to 1101 (RTGSVQTSPSSTPG) has biased composition (polar residues). At serine 1095 the chain carries Phosphoserine. Positions 1154–1165 (KYRSGWDPHRGA) are enriched in basic and acidic residues. Residue serine 1175 is modified to Phosphoserine. The segment covering 1178–1187 (SDVSAVSRTS) has biased composition (low complexity). A Phosphoserine modification is found at serine 1251. The C2 2 domain maps to 1376–1494 (AMGDIQVGMM…ELSNMVIGWF (119 aa)). Phosphoserine is present on residues serine 1515 and serine 1518.

As to quaternary structure, interacts with TSPOAP1 and RIMBP2. Interacts with PPFIA3 and PPFIA4. Interacts via its zinc finger with the first C2 domain of UNC13A. Forms a complex consisting of UNC13A, RIMS2 and RAB3A. Heterodimer with PCLO. Part of a ternary complex involving PCLO and EPAC2. Interacts with RAB3A and RAB3B that have been activated by GTP-binding. Interacts with RAB3C, RAB3D and RAB26. In terms of tissue distribution, detected in testis, pituitary and an insulinoma cell line. Detected at low levels in cerebellar cortex.

It is found in the synapse. It localises to the synaptosome. In terms of biological role, rab effector involved in exocytosis. May act as scaffold protein. Plays a role in dendrite formation by melanocytes. The chain is Regulating synaptic membrane exocytosis protein 2 (Rims2) from Mus musculus (Mouse).